A 61-amino-acid polypeptide reads, in one-letter code: UPF0434 protein PST_2635 (61 aa).

This sequence belongs to the UPF0434 family.

The chain is UPF0434 protein PST_2635 from Stutzerimonas stutzeri (strain A1501) (Pseudomonas stutzeri).